We begin with the raw amino-acid sequence, 124 residues long: Small ribosomal subunit protein uS12 (124 aa).

A 3-methylthioaspartic acid modification is found at D89.

It belongs to the universal ribosomal protein uS12 family. Part of the 30S ribosomal subunit. Contacts proteins S8 and S17. May interact with IF1 in the 30S initiation complex.

In terms of biological role, with S4 and S5 plays an important role in translational accuracy. Functionally, interacts with and stabilizes bases of the 16S rRNA that are involved in tRNA selection in the A site and with the mRNA backbone. Located at the interface of the 30S and 50S subunits, it traverses the body of the 30S subunit contacting proteins on the other side and probably holding the rRNA structure together. The combined cluster of proteins S8, S12 and S17 appears to hold together the shoulder and platform of the 30S subunit. The chain is Small ribosomal subunit protein uS12 from Nitratiruptor sp. (strain SB155-2).